The primary structure comprises 336 residues: Holliday junction branch migration complex subunit RuvB (336 aa).

The tract at residues 4-184 is large ATPase domain (RuvB-L); it reads ADRLISASGG…FGIVQRLEFY (181 aa). Residues isoleucine 23, arginine 24, glycine 65, lysine 68, threonine 69, threonine 70, 131–133, arginine 174, tyrosine 184, and arginine 221 each bind ATP; that span reads EDY. Threonine 69 contacts Mg(2+). Residues 185–255 are small ATPAse domain (RuvB-S); the sequence is NVKDLTDIVA…IAARAMDMLD (71 aa). Residues 258–336 are head domain (RuvB-H); the sequence is NEGFDFMDRK…HFGLQRPDEG (79 aa). The DNA site is built by arginine 313 and arginine 318.

This sequence belongs to the RuvB family. In terms of assembly, homohexamer. Forms an RuvA(8)-RuvB(12)-Holliday junction (HJ) complex. HJ DNA is sandwiched between 2 RuvA tetramers; dsDNA enters through RuvA and exits via RuvB. An RuvB hexamer assembles on each DNA strand where it exits the tetramer. Each RuvB hexamer is contacted by two RuvA subunits (via domain III) on 2 adjacent RuvB subunits; this complex drives branch migration. In the full resolvosome a probable DNA-RuvA(4)-RuvB(12)-RuvC(2) complex forms which resolves the HJ.

The protein resides in the cytoplasm. It catalyses the reaction ATP + H2O = ADP + phosphate + H(+). The RuvA-RuvB-RuvC complex processes Holliday junction (HJ) DNA during genetic recombination and DNA repair, while the RuvA-RuvB complex plays an important role in the rescue of blocked DNA replication forks via replication fork reversal (RFR). RuvA specifically binds to HJ cruciform DNA, conferring on it an open structure. The RuvB hexamer acts as an ATP-dependent pump, pulling dsDNA into and through the RuvAB complex. RuvB forms 2 homohexamers on either side of HJ DNA bound by 1 or 2 RuvA tetramers; 4 subunits per hexamer contact DNA at a time. Coordinated motions by a converter formed by DNA-disengaged RuvB subunits stimulates ATP hydrolysis and nucleotide exchange. Immobilization of the converter enables RuvB to convert the ATP-contained energy into a lever motion, pulling 2 nucleotides of DNA out of the RuvA tetramer per ATP hydrolyzed, thus driving DNA branch migration. The RuvB motors rotate together with the DNA substrate, which together with the progressing nucleotide cycle form the mechanistic basis for DNA recombination by continuous HJ branch migration. Branch migration allows RuvC to scan DNA until it finds its consensus sequence, where it cleaves and resolves cruciform DNA. This is Holliday junction branch migration complex subunit RuvB from Aeromonas hydrophila subsp. hydrophila (strain ATCC 7966 / DSM 30187 / BCRC 13018 / CCUG 14551 / JCM 1027 / KCTC 2358 / NCIMB 9240 / NCTC 8049).